The following is a 381-amino-acid chain: MTTTDPVQLTADLVRCPSVTPTEGGALVLLERLLTDAGFSCTRVDRGEVCNLFARWGDKAHARTFGFNGHTDVVPIGDEAAWTHDPFGAEIVEGVMYGRGTTDMKSGVAAFAAAAIDFVQDTPPDGAVVLTITGDEEGDAVDGTTALLDYMDAAGEKMSVCLVGEPTCPNHMGEMIKIGRRGSMTAWFTVTGVQGHSAYPHRANNPMNGLARLMDRLGSHQLDEGSEHFDASTLAIVTIDTGNPATNVIPAQGRAAVNIRFNDLHSGASLTDWLQGEADKVAKEFGLEVDMKVQISGESFITPPGDLSDLVSRAVQTETNQAPELSTTGGTSDARFVKSHCPVVEFGLVGKTMHQVDENVDVAHIHQLKSIYSRILKDYFS.

Histidine 70 is a Zn(2+) binding site. Aspartate 72 is an active-site residue. Aspartate 103 is a binding site for Zn(2+). The active-site Proton acceptor is glutamate 136. Glutamate 137, glutamate 165, and histidine 354 together coordinate Zn(2+).

This sequence belongs to the peptidase M20A family. DapE subfamily. In terms of assembly, homodimer. Zn(2+) serves as cofactor. It depends on Co(2+) as a cofactor.

The catalysed reaction is N-succinyl-(2S,6S)-2,6-diaminopimelate + H2O = (2S,6S)-2,6-diaminopimelate + succinate. Its pathway is amino-acid biosynthesis; L-lysine biosynthesis via DAP pathway; LL-2,6-diaminopimelate from (S)-tetrahydrodipicolinate (succinylase route): step 3/3. Catalyzes the hydrolysis of N-succinyl-L,L-diaminopimelic acid (SDAP), forming succinate and LL-2,6-diaminopimelate (DAP), an intermediate involved in the bacterial biosynthesis of lysine and meso-diaminopimelic acid, an essential component of bacterial cell walls. This Ruegeria sp. (strain TM1040) (Silicibacter sp.) protein is Succinyl-diaminopimelate desuccinylase 1.